Here is a 367-residue protein sequence, read N- to C-terminus: Phosphoribosylaminoimidazole-succinocarboxamide synthase (367 aa).

It belongs to the SAICAR synthetase family.

It carries out the reaction 5-amino-1-(5-phospho-D-ribosyl)imidazole-4-carboxylate + L-aspartate + ATP = (2S)-2-[5-amino-1-(5-phospho-beta-D-ribosyl)imidazole-4-carboxamido]succinate + ADP + phosphate + 2 H(+). It functions in the pathway purine metabolism; IMP biosynthesis via de novo pathway; 5-amino-1-(5-phospho-D-ribosyl)imidazole-4-carboxamide from 5-amino-1-(5-phospho-D-ribosyl)imidazole-4-carboxylate: step 1/2. The polypeptide is Phosphoribosylaminoimidazole-succinocarboxamide synthase (Aliivibrio fischeri (strain MJ11) (Vibrio fischeri)).